Consider the following 152-residue polypeptide: Ribosome maturation factor RimP (152 aa).

It belongs to the RimP family.

The protein localises to the cytoplasm. Its function is as follows. Required for maturation of 30S ribosomal subunits. This Proteus mirabilis (strain HI4320) protein is Ribosome maturation factor RimP.